A 94-amino-acid polypeptide reads, in one-letter code: MATQKFSYFLLVLLMVFALILPSIISVEVIPCIAGSKCTNDMTYNELCRFKGFSKGGFCQKYVHQTIGRCCCHPTGLESQESSISGDTNVVITN.

The first 26 residues, 1–26, serve as a signal peptide directing secretion; the sequence is MATQKFSYFLLVLLMVFALILPSIIS. 3 disulfide bridges follow: Cys-32/Cys-72, Cys-38/Cys-59, and Cys-48/Cys-71.

The protein belongs to the DEFL family.

The protein localises to the secreted. This chain is Putative defensin-like protein 88, found in Arabidopsis thaliana (Mouse-ear cress).